A 112-amino-acid polypeptide reads, in one-letter code: Large ribosomal subunit protein uL24 (112 aa).

The protein belongs to the universal ribosomal protein uL24 family. As to quaternary structure, part of the 50S ribosomal subunit.

One of two assembly initiator proteins, it binds directly to the 5'-end of the 23S rRNA, where it nucleates assembly of the 50S subunit. In terms of biological role, one of the proteins that surrounds the polypeptide exit tunnel on the outside of the subunit. The sequence is that of Large ribosomal subunit protein uL24 from Desulfitobacterium hafniense (strain Y51).